A 1318-amino-acid polypeptide reads, in one-letter code: Tetratricopeptide repeat protein 41 (1318 aa).

TPR repeat units follow at residues 401–434 (PRLE…KPCI), 653–686 (WIQE…PVRE), 819–852 (GRII…LLQS), 860–893 (LRAQ…LLRF), 993–1029 (MEFL…KEKA), and 1047–1084 (SDTL…RAAH). The interval 1295 to 1318 (KPGFPRRSQIESKLLKTSDDPNKE) is disordered. Residues 1302–1318 (SQIESKLLKTSDDPNKE) are compositionally biased toward basic and acidic residues.

As to expression, highly expressed in lung and myeloid leukemia cell line (at protein level). Isoform 4: expressed in heart (at protein level).

It localises to the cytoplasm. In Mus musculus (Mouse), this protein is Tetratricopeptide repeat protein 41.